The following is a 463-amino-acid chain: Glutamate--tRNA ligase 1 (463 aa).

Positions 10–20 match the 'HIGH' region motif; that stretch reads PSPTGYLHIGG. Positions 238 to 242 match the 'KMSKS' region motif; sequence KLSKR. Lys241 provides a ligand contact to ATP.

Belongs to the class-I aminoacyl-tRNA synthetase family. Glutamate--tRNA ligase type 1 subfamily. As to quaternary structure, monomer.

The protein resides in the cytoplasm. The catalysed reaction is tRNA(Glu) + L-glutamate + ATP = L-glutamyl-tRNA(Glu) + AMP + diphosphate. In terms of biological role, catalyzes the attachment of glutamate to tRNA(Glu) in a two-step reaction: glutamate is first activated by ATP to form Glu-AMP and then transferred to the acceptor end of tRNA(Glu). This chain is Glutamate--tRNA ligase 1, found in Helicobacter pylori (strain P12).